The primary structure comprises 151 residues: Phosphopantetheine adenylyltransferase (151 aa).

Position 9 (Thr9) interacts with substrate. ATP-binding positions include Thr9 to Phe10 and His17. Residues Lys41, Thr73, and Arg87 each coordinate substrate. Residues Gly88–Arg90, Glu98, and Leu122–Thr128 contribute to the ATP site.

It belongs to the bacterial CoaD family. Homohexamer. It depends on Mg(2+) as a cofactor.

The protein resides in the cytoplasm. The catalysed reaction is (R)-4'-phosphopantetheine + ATP + H(+) = 3'-dephospho-CoA + diphosphate. It participates in cofactor biosynthesis; coenzyme A biosynthesis; CoA from (R)-pantothenate: step 4/5. Functionally, reversibly transfers an adenylyl group from ATP to 4'-phosphopantetheine, yielding dephospho-CoA (dPCoA) and pyrophosphate. In Bacteroides thetaiotaomicron (strain ATCC 29148 / DSM 2079 / JCM 5827 / CCUG 10774 / NCTC 10582 / VPI-5482 / E50), this protein is Phosphopantetheine adenylyltransferase.